Consider the following 297-residue polypeptide: Probable endonuclease 4 (297 aa).

H69, H110, E145, D179, H182, H214, D227, H229, and E259 together coordinate Zn(2+).

This sequence belongs to the AP endonuclease 2 family. It depends on Zn(2+) as a cofactor.

The catalysed reaction is Endonucleolytic cleavage to 5'-phosphooligonucleotide end-products.. Its function is as follows. Endonuclease IV plays a role in DNA repair. It cleaves phosphodiester bonds at apurinic or apyrimidinic (AP) sites, generating a 3'-hydroxyl group and a 5'-terminal sugar phosphate. This chain is Probable endonuclease 4, found in Bacillus licheniformis (strain ATCC 14580 / DSM 13 / JCM 2505 / CCUG 7422 / NBRC 12200 / NCIMB 9375 / NCTC 10341 / NRRL NRS-1264 / Gibson 46).